The primary structure comprises 511 residues: Probable lipid II flippase MurJ (511 aa).

The next 11 membrane-spanning stretches (helical) occupy residues 25–45, 85–105, 133–153, 156–178, 245–265, 271–291, 315–335, 356–376, 400–420, 442–462, and 481–501; these read DILI…FISF, SSIL…GGFF, IMFP…ILNS, YFSI…SVFF, ISLI…ISWI, LIEF…FTSL, LIVS…VIIV, LYSC…AFYA, FLIF…TSWV, FIFI…LFVV, and LFFG…ILGI.

This sequence belongs to the MurJ/MviN family.

It localises to the cell inner membrane. It participates in cell wall biogenesis; peptidoglycan biosynthesis. In terms of biological role, involved in peptidoglycan biosynthesis. Transports lipid-linked peptidoglycan precursors from the inner to the outer leaflet of the cytoplasmic membrane. This chain is Probable lipid II flippase MurJ, found in Buchnera aphidicola subsp. Acyrthosiphon pisum (strain APS) (Acyrthosiphon pisum symbiotic bacterium).